The chain runs to 161 residues: PHD finger-containing protein 4 (161 aa).

The PHD-type zinc finger occupies 30–80 (KKPCEVCGSNANDHAIMTCFLCRDTREHIYCARVHLRSVPRMWICEECRMN). Residues C33, C36, C48, C51, H57, C60, C74, and C77 each contribute to the Zn(2+) site. The segment covering 114–132 (TMTSSDSGNQISATHQQPP) has biased composition (polar residues). Residues 114–161 (TMTSSDSGNQISATHQQPPQAHASPVAVPMDTSSSDNQQPPSDSESAI) form a disordered region. A compositionally biased stretch (low complexity) spans 146 to 161 (SSSDNQQPPSDSESAI).

As to quaternary structure, interacts directly with AIPP3/BDT1.

Its function is as follows. Together with AIPP3/BDT1, cooperates to form a BAH-PHD bivalent histone reader complex able to read histone H3 lysine 27 trimethylation (H3K27me3) histone marks in order to regulate transcription, especially to prevent early flowering; promotes AIPP3/BDT1 binding to H3K27me3. This is PHD finger-containing protein 4 from Arabidopsis thaliana (Mouse-ear cress).